Here is a 638-residue protein sequence, read N- to C-terminus: NBPF family member NBPF4 (638 aa).

Coiled-coil stretches lie at residues 10-43 (SERAEMNILEINQELRSQLAESNQQFRDLKEKFL) and 69-115 (DSVL…KLRE). The disordered stretch occupies residues 157–285 (HLVHKLSPEN…VPPRHHDKSN (129 aa)). Positions 165–179 (ENDEDEDEDEDDKDE) are enriched in acidic residues. One can recognise an Olduvai 1 domain in the interval 174 to 261 (EDDKDEEVEK…EEEEALNIPP (88 aa)). The segment covering 192-202 (EVQKTEEKEVP) has biased composition (basic and acidic residues). Over residues 214 to 226 (SNSHNPSNSNQPH) the composition is skewed to low complexity. Basic and acidic residues-rich tracts occupy residues 232 to 251 (TFKEHEVDSALVVESEHPHD) and 264 to 273 (QNDHEEEEGK). Olduvai domains are found at residues 326-399 (EKQS…ALVD) and 400-503 (KIKK…SQAQ). Residues 562–584 (GMKNPPQLEDDALEGSASNTQGR) form a disordered region.

Belongs to the NBPF family. As to expression, expressed in testis.

The protein resides in the cytoplasm. This chain is NBPF family member NBPF4, found in Homo sapiens (Human).